The sequence spans 345 residues: 4-hydroxy-2-oxovalerate aldolase 3 (345 aa).

The Pyruvate carboxyltransferase domain occupies 8 to 260; the sequence is ITVHDMTLRD…ETGVDVWKIQ (253 aa). Residue 16 to 17 coordinates substrate; sequence RD. A Mn(2+)-binding site is contributed by D17. H20 acts as the Proton acceptor in catalysis. Substrate is bound by residues S170 and H199. 2 residues coordinate Mn(2+): H199 and H201. Y290 lines the substrate pocket.

The protein belongs to the 4-hydroxy-2-oxovalerate aldolase family.

It carries out the reaction (S)-4-hydroxy-2-oxopentanoate = acetaldehyde + pyruvate. In Comamonas testosteroni (Pseudomonas testosteroni), this protein is 4-hydroxy-2-oxovalerate aldolase 3 (aphG).